Consider the following 368-residue polypeptide: 4-hydroxy-3-methylbut-2-en-1-yl diphosphate synthase (flavodoxin) (368 aa).

4 residues coordinate [4Fe-4S] cluster: cysteine 271, cysteine 274, cysteine 306, and glutamate 313.

Belongs to the IspG family. It depends on [4Fe-4S] cluster as a cofactor.

It catalyses the reaction (2E)-4-hydroxy-3-methylbut-2-enyl diphosphate + oxidized [flavodoxin] + H2O + 2 H(+) = 2-C-methyl-D-erythritol 2,4-cyclic diphosphate + reduced [flavodoxin]. Its pathway is isoprenoid biosynthesis; isopentenyl diphosphate biosynthesis via DXP pathway; isopentenyl diphosphate from 1-deoxy-D-xylulose 5-phosphate: step 5/6. Its function is as follows. Converts 2C-methyl-D-erythritol 2,4-cyclodiphosphate (ME-2,4cPP) into 1-hydroxy-2-methyl-2-(E)-butenyl 4-diphosphate. The protein is 4-hydroxy-3-methylbut-2-en-1-yl diphosphate synthase (flavodoxin) of Mannheimia succiniciproducens (strain KCTC 0769BP / MBEL55E).